The primary structure comprises 340 residues: L-threonine 3-dehydrogenase (340 aa).

C38 is a binding site for Zn(2+). Active-site charge relay system residues include T40 and H43. Zn(2+) is bound by residues H63, E64, C93, C96, C99, and C107. Residues I175, D195, R200, 262 to 264, and 286 to 287 each bind NAD(+); these read LGI and IY.

Belongs to the zinc-containing alcohol dehydrogenase family. Homotetramer. Requires Zn(2+) as cofactor.

The protein resides in the cytoplasm. It carries out the reaction L-threonine + NAD(+) = (2S)-2-amino-3-oxobutanoate + NADH + H(+). It participates in amino-acid degradation; L-threonine degradation via oxydo-reductase pathway; glycine from L-threonine: step 1/2. Functionally, catalyzes the NAD(+)-dependent oxidation of L-threonine to 2-amino-3-ketobutyrate. This is L-threonine 3-dehydrogenase from Legionella pneumophila (strain Corby).